Here is a 390-residue protein sequence, read N- to C-terminus: Digeranylgeranylglycerophospholipid reductase (390 aa).

The FAD site is built by alanine 18, glutamate 37, cysteine 48, alanine 49, alanine 51, arginine 98, valine 122, aspartate 278, glycine 290, and isoleucine 291. A 2,3-bis-O-(geranylgeranyl)-sn-glycerol 1-phospholipid is bound at residue valine 368.

Belongs to the geranylgeranyl reductase family. DGGGPL reductase subfamily. Requires FAD as cofactor.

The catalysed reaction is a 2,3-bis-O-phytanyl-sn-glycerol 1-phospholipid + 8 A = a 2,3-bis-O-(geranylgeranyl)-sn-glycerol 1-phospholipid + 8 AH2. It catalyses the reaction 2,3-bis-O-(phytanyl)-sn-glycerol 1-phosphate + 8 A = 2,3-bis-O-(geranylgeranyl)-sn-glycerol 1-phosphate + 8 AH2. The enzyme catalyses CDP-2,3-bis-O-(geranylgeranyl)-sn-glycerol + 8 AH2 = CDP-2,3-bis-O-(phytanyl)-sn-glycerol + 8 A. It carries out the reaction archaetidylserine + 8 AH2 = 2,3-bis-O-phytanyl-sn-glycero-3-phospho-L-serine + 8 A. Its pathway is membrane lipid metabolism; glycerophospholipid metabolism. Functionally, is involved in the reduction of 2,3-digeranylgeranylglycerophospholipids (unsaturated archaeols) into 2,3-diphytanylglycerophospholipids (saturated archaeols) in the biosynthesis of archaeal membrane lipids. Catalyzes the formation of archaetidic acid (2,3-di-O-phytanyl-sn-glyceryl phosphate) from 2,3-di-O-geranylgeranylglyceryl phosphate (DGGGP) via the hydrogenation of each double bond of the isoprenoid chains. Is also probably able to reduce double bonds of geranyl groups in CDP-2,3-bis-O-(geranylgeranyl)-sn-glycerol and archaetidylserine, thus acting at various stages in the biosynthesis of archaeal membrane lipids. The polypeptide is Digeranylgeranylglycerophospholipid reductase (Methanococcus maripaludis (strain C5 / ATCC BAA-1333)).